A 513-amino-acid polypeptide reads, in one-letter code: Bifunctional pantoate ligase/cytidylate kinase (513 aa).

A pantoate--beta-alanine ligase region spans residues 1–282; the sequence is MGTFHRLTTT…VGQTRLIDNC (282 aa). 32-39 is an ATP binding site; that stretch reads MGALHGGH. His-39 acts as the Proton donor in catalysis. Position 63 (Gln-63) interacts with (R)-pantoate. Gln-63 is a binding site for beta-alanine. 152 to 155 is a binding site for ATP; it reads GQKD. Gln-158 contacts (R)-pantoate. ATP-binding positions include Val-181 and 189–192; that span reads LSSR. The cytidylate kinase stretch occupies residues 283 to 513; the sequence is LLDRRRPILA…HLYRSRFPQP (231 aa).

In the N-terminal section; belongs to the pantothenate synthetase family. The protein in the C-terminal section; belongs to the cytidylate kinase family. Type 1 subfamily.

It localises to the cytoplasm. It catalyses the reaction (R)-pantoate + beta-alanine + ATP = (R)-pantothenate + AMP + diphosphate + H(+). It carries out the reaction CMP + ATP = CDP + ADP. The catalysed reaction is dCMP + ATP = dCDP + ADP. It functions in the pathway cofactor biosynthesis; (R)-pantothenate biosynthesis; (R)-pantothenate from (R)-pantoate and beta-alanine: step 1/1. Its function is as follows. Catalyzes the condensation of pantoate with beta-alanine in an ATP-dependent reaction via a pantoyl-adenylate intermediate. In terms of biological role, catalyzes the transfer of a phosphate group from ATP to either CMP or dCMP to form CDP or dCDP and ADP, respectively. The sequence is that of Bifunctional pantoate ligase/cytidylate kinase from Thermosynechococcus vestitus (strain NIES-2133 / IAM M-273 / BP-1).